Reading from the N-terminus, the 503-residue chain is Trehalose-6-phosphate synthase (503 aa).

The span at 1–14 (MTDQSGNGVRSGSA) shows a compositional bias: polar residues. The interval 1 to 20 (MTDQSGNGVRSGSASEAPPS) is disordered. Arginine 31 contacts D-glucose 6-phosphate. 51-52 (GG) serves as a coordination point for UDP-alpha-D-glucose. D-glucose 6-phosphate-binding residues include tyrosine 109 and aspartate 163. Positions 305 and 310 each coordinate UDP-alpha-D-glucose. Arginine 343 is a binding site for D-glucose 6-phosphate. 408 to 412 (LVAKE) serves as a coordination point for UDP-alpha-D-glucose.

This sequence belongs to the glycosyltransferase 20 family. As to quaternary structure, homotetramer.

The enzyme catalyses ADP-alpha-D-glucose + D-glucose 6-phosphate = alpha,alpha-trehalose 6-phosphate + ADP + H(+). The catalysed reaction is CDP-alpha-D-glucose + D-glucose 6-phosphate = alpha,alpha-trehalose 6-phosphate + CDP + H(+). It catalyses the reaction GDP-alpha-D-glucose + D-glucose 6-phosphate = alpha,alpha-trehalose 6-phosphate + GDP + H(+). It carries out the reaction TDP-alpha-D-glucose + D-glucose 6-phosphate = 5-methyl-UDP + alpha,alpha-trehalose 6-phosphate + H(+). The enzyme catalyses D-glucose 6-phosphate + UDP-alpha-D-glucose = alpha,alpha-trehalose 6-phosphate + UDP + H(+). The protein operates within glycan biosynthesis; trehalose biosynthesis. In terms of biological role, probably involved in the osmoprotection via the biosynthesis of trehalose and in the production of glycogen and alpha-glucan via the TreS-Pep2 branch involved in the biosynthesis of maltose-1-phosphate (M1P). Catalyzes the transfer of glucose from UDP-glucose (UDP-Glc) to D-glucose 6-phosphate (Glc-6-P) to form trehalose-6-phosphate. Probably also able to use ADP-Glc, CDP-Glc, GDP-Glc and TDP-Glc as glucosyl donors. This is Trehalose-6-phosphate synthase from Mycolicibacterium gilvum (strain PYR-GCK) (Mycobacterium gilvum (strain PYR-GCK)).